The sequence spans 274 residues: Elongation factor Ts (274 aa).

The tract at residues 82 to 85 is involved in Mg(2+) ion dislocation from EF-Tu; sequence TDFV.

This sequence belongs to the EF-Ts family.

The protein resides in the cytoplasm. Its function is as follows. Associates with the EF-Tu.GDP complex and induces the exchange of GDP to GTP. It remains bound to the aminoacyl-tRNA.EF-Tu.GTP complex up to the GTP hydrolysis stage on the ribosome. In Flavobacterium psychrophilum (strain ATCC 49511 / DSM 21280 / CIP 103535 / JIP02/86), this protein is Elongation factor Ts.